Reading from the N-terminus, the 209-residue chain is Large ribosomal subunit protein uL3 (209 aa).

A disordered region spans residues 128–154; it reads QQRGPMTHGSKFHRAPGSMGASSDPSR.

Belongs to the universal ribosomal protein uL3 family. In terms of assembly, part of the 50S ribosomal subunit. Forms a cluster with proteins L14 and L19.

Its function is as follows. One of the primary rRNA binding proteins, it binds directly near the 3'-end of the 23S rRNA, where it nucleates assembly of the 50S subunit. The sequence is that of Large ribosomal subunit protein uL3 from Clostridium beijerinckii (strain ATCC 51743 / NCIMB 8052) (Clostridium acetobutylicum).